The following is a 120-amino-acid chain: MAQNVEQQVAQLQQLQQQLSSIVAQKQQLELQLREIERALKELDEIEEDTKVYKTVGGLLIEADRDEVKEELEDRKETLELRVKTLEKQEKRLQQQIENLQKRLQKALQQAEGGGGAGAA.

Belongs to the prefoldin subunit beta family. In terms of assembly, heterohexamer of two alpha and four beta subunits.

It localises to the cytoplasm. Its function is as follows. Molecular chaperone capable of stabilizing a range of proteins. Seems to fulfill an ATP-independent, HSP70-like function in archaeal de novo protein folding. This chain is Prefoldin subunit beta (pfdB), found in Methanopyrus kandleri (strain AV19 / DSM 6324 / JCM 9639 / NBRC 100938).